Here is a 201-residue protein sequence, read N- to C-terminus: Histidinol dehydrogenase (201 aa).

The protein belongs to the histidinol dehydrogenase family. Homodimer. It depends on Zn(2+) as a cofactor.

It carries out the reaction L-histidinol + 2 NAD(+) + H2O = L-histidine + 2 NADH + 3 H(+). The protein operates within amino-acid biosynthesis; L-histidine biosynthesis; L-histidine from 5-phospho-alpha-D-ribose 1-diphosphate: step 9/9. Functionally, catalyzes the sequential NAD-dependent oxidations of L-histidinol to L-histidinaldehyde and then to L-histidine. This chain is Histidinol dehydrogenase (hisD), found in Buchnera aphidicola subsp. Diuraphis noxia.